Consider the following 24-residue polypeptide: Lectin (24 aa).

The protein belongs to the leguminous lectin family. In terms of assembly, homotetramer.

Its function is as follows. Agglutinates erythrocytes of blood group A. Binds in decreasing order of affinity: N-acetyl-D-galactosamine, D-galactose, and D-galactosamine. The polypeptide is Lectin (Crotalaria pallida (Smooth rattlebox)).